Reading from the N-terminus, the 61-residue chain is Alpha-conotoxin-like Lp1.6a (61 aa).

Residues methionine 1–serine 21 form the signal peptide. Residues phenylalanine 22–arginine 44 constitute a propeptide that is removed on maturation. Glutamine 45 bears the Pyrrolidone carboxylic acid mark. 2 disulfide bridges follow: cysteine 47/cysteine 53 and cysteine 48/cysteine 60. Residue cysteine 60 is modified to Cysteine amide.

The protein belongs to the conotoxin A superfamily. Expressed by the venom duct.

It is found in the secreted. Alpha-conotoxins act on postsynaptic membranes, they bind to the nicotinic acetylcholine receptors (nAChR) and thus inhibit them. In Conus leopardus (Leopard cone), this protein is Alpha-conotoxin-like Lp1.6a.